Reading from the N-terminus, the 471-residue chain is NALCN channel auxiliary factor 2 (471 aa).

Residues 47-67 (LASLLFFTVLLADHLWLCAGA) form a helical membrane-spanning segment. Positions 76-115 (SAMRPPWGAGRERQPVPPRAVLPPPPPSPGEPSASSGTCG) are disordered. The segment covering 90–105 (PVPPRAVLPPPPPSPG) has biased composition (pro residues). A glycan (N-linked (GlcNAc...) asparagine) is linked at N120. Disordered regions lie at residues 158–178 (EPTT…APEF) and 399–424 (HYHP…GGSR). Positions 161-171 (TPAPPLRPPDS) are enriched in pro residues. Residues 432 to 452 (LCVLVLILLHTVVSFSSSQSG) traverse the membrane as a helical segment.

Belongs to the NALF family.

Its subcellular location is the membrane. Probable component of the NALCN channel complex, a channel that regulates the resting membrane potential and controls neuronal excitability. In Mus musculus (Mouse), this protein is NALCN channel auxiliary factor 2 (Nalf2).